The sequence spans 223 residues: Phosphoribosylformylglycinamidine synthase subunit PurQ (223 aa).

The Glutamine amidotransferase type-1 domain occupies 4–223; that stretch reads FAVVVFPGTN…FRSMVEWARK (220 aa). Cysteine 85 acts as the Nucleophile in catalysis. Active-site residues include histidine 196 and glutamate 198.

Part of the FGAM synthase complex composed of 1 PurL, 1 PurQ and 2 PurS subunits.

The protein localises to the cytoplasm. It carries out the reaction N(2)-formyl-N(1)-(5-phospho-beta-D-ribosyl)glycinamide + L-glutamine + ATP + H2O = 2-formamido-N(1)-(5-O-phospho-beta-D-ribosyl)acetamidine + L-glutamate + ADP + phosphate + H(+). The catalysed reaction is L-glutamine + H2O = L-glutamate + NH4(+). Its pathway is purine metabolism; IMP biosynthesis via de novo pathway; 5-amino-1-(5-phospho-D-ribosyl)imidazole from N(2)-formyl-N(1)-(5-phospho-D-ribosyl)glycinamide: step 1/2. Its function is as follows. Part of the phosphoribosylformylglycinamidine synthase complex involved in the purines biosynthetic pathway. Catalyzes the ATP-dependent conversion of formylglycinamide ribonucleotide (FGAR) and glutamine to yield formylglycinamidine ribonucleotide (FGAM) and glutamate. The FGAM synthase complex is composed of three subunits. PurQ produces an ammonia molecule by converting glutamine to glutamate. PurL transfers the ammonia molecule to FGAR to form FGAM in an ATP-dependent manner. PurS interacts with PurQ and PurL and is thought to assist in the transfer of the ammonia molecule from PurQ to PurL. This chain is Phosphoribosylformylglycinamidine synthase subunit PurQ, found in Thermococcus kodakarensis (strain ATCC BAA-918 / JCM 12380 / KOD1) (Pyrococcus kodakaraensis (strain KOD1)).